The sequence spans 673 residues: Probable urea active transporter 2 (673 aa).

A run of 14 helical transmembrane segments spans residues 8–28, 83–103, 132–152, 164–184, 196–218, 249–269, 287–307, 336–356, 391–411, 424–446, 451–471, 492–512, 559–579, and 592–612; these read GYGY…MAII, IMGG…FLFL, VYLF…LLGG, TVAA…LGGL, VMIY…LIGS, MMYL…GDPG, LMGG…AGLA, IYGM…VMLF, QLVR…GALS, LLTF…LFWN, FSLV…WLAS, FVGN…LSYI, IGIN…ALLG, and LIIV…LFPL.

The protein belongs to the sodium:solute symporter (SSF) (TC 2.A.21) family.

Its subcellular location is the endoplasmic reticulum membrane. Involved in active transport of urea. This is Probable urea active transporter 2 (dur3-2) from Schizosaccharomyces pombe (strain 972 / ATCC 24843) (Fission yeast).